The following is a 344-amino-acid chain: Dihydroorotase (344 aa).

Residues His14 and His16 each contribute to the Zn(2+) site. Substrate is bound by residues His16 to Arg18 and Asn42. Residues Lys100, His137, and His175 each contribute to the Zn(2+) site. N6-carboxylysine is present on Lys100. Residue His137 coordinates substrate. Position 220 (Leu220) interacts with substrate. Asp248 contributes to the Zn(2+) binding site. The active site involves Asp248. Positions 252 and 264 each coordinate substrate.

It belongs to the metallo-dependent hydrolases superfamily. DHOase family. Class II DHOase subfamily. In terms of assembly, homodimer. The cofactor is Zn(2+).

The enzyme catalyses (S)-dihydroorotate + H2O = N-carbamoyl-L-aspartate + H(+). It participates in pyrimidine metabolism; UMP biosynthesis via de novo pathway; (S)-dihydroorotate from bicarbonate: step 3/3. Its function is as follows. Catalyzes the reversible cyclization of carbamoyl aspartate to dihydroorotate. The protein is Dihydroorotase of Roseobacter denitrificans (strain ATCC 33942 / OCh 114) (Erythrobacter sp. (strain OCh 114)).